The sequence spans 533 residues: T-complex protein 1 subunit delta (533 aa).

The interval 1–24 (MVVKPAARGMKPQGQAYKDKSKPA) is disordered.

It belongs to the TCP-1 chaperonin family. As to quaternary structure, heterooligomeric complex of about 850 to 900 kDa that forms two stacked rings, 12 to 16 nm in diameter.

It localises to the cytoplasm. Molecular chaperone; assists the folding of proteins upon ATP hydrolysis. Known to play a role, in vitro, in the folding of actin and tubulin. This chain is T-complex protein 1 subunit delta, found in Ochlerotatus triseriatus (Eastern treehole mosquito).